We begin with the raw amino-acid sequence, 368 residues long: 7,8-didemethyl-8-hydroxy-5-deazariboflavin synthase (368 aa).

In terms of domain architecture, Radical SAM core spans 36–272; sequence LSYCRNVFLP…EEVSVQVPPN (237 aa). Residues Cys50, Cys54, and Cys57 each contribute to the [4Fe-4S] cluster site.

This sequence belongs to the radical SAM superfamily. CofG family. As to quaternary structure, consists of two subunits, CofG and CofH. [4Fe-4S] cluster is required as a cofactor.

The catalysed reaction is 5-amino-5-(4-hydroxybenzyl)-6-(D-ribitylimino)-5,6-dihydrouracil + S-adenosyl-L-methionine = 7,8-didemethyl-8-hydroxy-5-deazariboflavin + 5'-deoxyadenosine + L-methionine + NH4(+) + H(+). Its pathway is cofactor biosynthesis; coenzyme F0 biosynthesis. Functionally, catalyzes the radical-mediated synthesis of 7,8-didemethyl-8-hydroxy-5-deazariboflavin from 5-amino-5-(4-hydroxybenzyl)-6-(D-ribitylimino)-5,6-dihydrouracil. This is 7,8-didemethyl-8-hydroxy-5-deazariboflavin synthase from Haloarcula marismortui (strain ATCC 43049 / DSM 3752 / JCM 8966 / VKM B-1809) (Halobacterium marismortui).